The primary structure comprises 330 residues: MKKNIAIVAGGDSSEIVISLKSADGIYSFIDKDKYNLYIAIVKRDEWAVILPSGEHTPIDKNDFSFKENGVTRHFDFAYITIHGTPGEDGRLQGYFDMIGMPYSSCGMLVSALTFNKYVCNHYLKDFGVKIAASIHLFKGETITDEEVVTRLGLPIFVKPNDGGSSFGVTKVKEVSAIQPAIAKAFGEGREVILERFIDGTEVTCGCYKVEGKEVVFPLTEVVTNNEFFDFDAKYNGQVDEITPARISTELTELIQCETSRIYDILGAKGLIRVDYIIPADGEPVLLEINTTPGMTATSFIPQQVRAAGLDIKDVMTDIIEDELKNRKTK.

The ATP-grasp domain maps to 121–321 (NHYLKDFGVK…IKDVMTDIIE (201 aa)). 149 to 204 (VTRLGLPIFVKPNDGGSSFGVTKVKEVSAIQPAIAKAFGEGREVILERFIDGTEVT) serves as a coordination point for ATP. Positions 275, 288, and 290 each coordinate Mg(2+).

It belongs to the D-alanine--D-alanine ligase family. The cofactor is Mg(2+). Requires Mn(2+) as cofactor.

The protein resides in the cytoplasm. The catalysed reaction is 2 D-alanine + ATP = D-alanyl-D-alanine + ADP + phosphate + H(+). It functions in the pathway cell wall biogenesis; peptidoglycan biosynthesis. Cell wall formation. The polypeptide is D-alanine--D-alanine ligase (Parabacteroides distasonis (strain ATCC 8503 / DSM 20701 / CIP 104284 / JCM 5825 / NCTC 11152)).